Consider the following 215-residue polypeptide: Probable GTP-binding protein EngB (215 aa).

An EngB-type G domain is found at 26–200 (EGIEVAFAGR…RAKLDEWFAP (175 aa)). GTP contacts are provided by residues 34–41 (GRSNAGKS), 61–65 (GRTQL), 79–82 (DLPG), 146–149 (TKAD), and 179–181 (FSS). Mg(2+)-binding residues include Ser41 and Thr63.

It belongs to the TRAFAC class TrmE-Era-EngA-EngB-Septin-like GTPase superfamily. EngB GTPase family. Mg(2+) is required as a cofactor.

Necessary for normal cell division and for the maintenance of normal septation. In Aliivibrio fischeri (strain MJ11) (Vibrio fischeri), this protein is Probable GTP-binding protein EngB.